Reading from the N-terminus, the 532-residue chain is Variant surface glycoprotein ILTAT 1.23 (532 aa).

A signal peptide spans 1–23 (MFKNINAAVLLLILSTRNDYANA). N-linked (GlcNAc...) asparagine glycosylation is present at N66. 2 disordered regions span residues 79–107 (APKK…RNHA) and 408–504 (MQAG…DQDK). The N-linked (GlcNAc...) asparagine glycan is linked to N419. The segment covering 427-445 (CKWEEKDGKDGKCVADDSK) has biased composition (basic and acidic residues). A compositionally biased stretch (low complexity) spans 450–470 (GNAPAGAGDGTAGTTTTPNCA). 2 stretches are compositionally biased toward basic and acidic residues: residues 472–484 (HTDK…ENKG) and 494–504 (KGKEGESDQDK). A glycan (N-linked (GlcNAc...) asparagine) is linked at N509. Residue N509 is the site of GPI-anchor amidated asparagine attachment. Positions 510–532 (GSFLAKKKFALSVVSAAFTALLF) are cleaved as a propeptide — removed in mature form.

Its subcellular location is the cell membrane. VSG forms a coat on the surface of the parasite. The trypanosome evades the immune response of the host by expressing a series of antigenically distinct VSGs from an estimated 1000 VSG genes. The chain is Variant surface glycoprotein ILTAT 1.23 from Trypanosoma brucei brucei.